We begin with the raw amino-acid sequence, 257 residues long: Protein Cmaq_1209 (257 aa).

This sequence belongs to the CinA family.

This is Protein Cmaq_1209 from Caldivirga maquilingensis (strain ATCC 700844 / DSM 13496 / JCM 10307 / IC-167).